The primary structure comprises 491 residues: Rab5 GDP/GTP exchange factor (491 aa).

Positions 1 to 74 (MSLKSERRGI…EEEAFASSQS (74 aa)) are interaction with ubiquitinated proteins. The A20-type zinc-finger motif lies at 13 to 47 (DQSDLLCKKGCGYYGNPAWQGFCSKCWREEYHKAR). The Zn(2+) site is built by C19, C23, C35, and C38. A disordered region spans residues 66–85 (EEAFASSQSSQGAQSLTFSK). Low complexity predominate over residues 69–84 (FASSQSSQGAQSLTFS). S124 and S132 each carry phosphoserine. N6-acetyllysine is present on residues K151 and K170. In terms of domain architecture, VPS9 spans 232 to 375 (EKKDLAIQKR…IEKLDAQSLN (144 aa)). Phosphoserine occurs at positions 373, 377, 390, and 400. A disordered region spans residues 462 to 491 (PPNQPLAAIDSENVENDKLPPPLQPQVYAG).

As to quaternary structure, interacts with RGS14; the interaction is GTP-dependent. Heterodimer with RABEP1. The heterodimer binds RAB4A and RAB5A that have been activated by GTP-binding. Interacts with RAB21, and with 100-fold lower affinity also with RAB22. Binds TSC2, GGA1, GGA2, GGA3, AP1G1 and AP1G2. Interacts with ubiquitinated EGFR. In terms of processing, monoubiquitinated.

The protein resides in the cytoplasm. The protein localises to the early endosome. It localises to the recycling endosome. Its function is as follows. Rab effector protein acting as linker between gamma-adaptin, RAB4A or RAB5A. Involved in endocytic membrane fusion and membrane trafficking of recycling endosomes. Stimulates nucleotide exchange on RAB5A. Can act as a ubiquitin ligase. This is Rab5 GDP/GTP exchange factor (RABGEF1) from Homo sapiens (Human).